The chain runs to 180 residues: Nucleoside-triphosphatase THEP1 (180 aa).

Residues 18-25 and 104-111 each bind ATP; these read GRPGVGKT and LVIMDEIG.

The protein belongs to the THEP1 NTPase family.

It catalyses the reaction a ribonucleoside 5'-triphosphate + H2O = a ribonucleoside 5'-diphosphate + phosphate + H(+). Its function is as follows. Has nucleotide phosphatase activity towards ATP, GTP, CTP, TTP and UTP. May hydrolyze nucleoside diphosphates with lower efficiency. The chain is Nucleoside-triphosphatase THEP1 from Metallosphaera sedula (strain ATCC 51363 / DSM 5348 / JCM 9185 / NBRC 15509 / TH2).